A 265-amino-acid chain; its full sequence is DNA repair protein RecO (265 aa).

It belongs to the RecO family.

In terms of biological role, involved in DNA repair and RecF pathway recombination. The polypeptide is DNA repair protein RecO (Mycolicibacterium paratuberculosis (strain ATCC BAA-968 / K-10) (Mycobacterium paratuberculosis)).